We begin with the raw amino-acid sequence, 254 residues long: Thiazole synthase (254 aa).

The Schiff-base intermediate with DXP role is filled by Lys95. 1-deoxy-D-xylulose 5-phosphate-binding positions include Gly156, 182–183 (AG), and 204–205 (NT).

The protein belongs to the ThiG family. As to quaternary structure, homotetramer. Forms heterodimers with either ThiH or ThiS.

It is found in the cytoplasm. It carries out the reaction [ThiS sulfur-carrier protein]-C-terminal-Gly-aminoethanethioate + 2-iminoacetate + 1-deoxy-D-xylulose 5-phosphate = [ThiS sulfur-carrier protein]-C-terminal Gly-Gly + 2-[(2R,5Z)-2-carboxy-4-methylthiazol-5(2H)-ylidene]ethyl phosphate + 2 H2O + H(+). It participates in cofactor biosynthesis; thiamine diphosphate biosynthesis. Functionally, catalyzes the rearrangement of 1-deoxy-D-xylulose 5-phosphate (DXP) to produce the thiazole phosphate moiety of thiamine. Sulfur is provided by the thiocarboxylate moiety of the carrier protein ThiS. In vitro, sulfur can be provided by H(2)S. This is Thiazole synthase from Shewanella baltica (strain OS195).